The chain runs to 208 residues: Uracil phosphoribosyltransferase (208 aa).

5-phospho-alpha-D-ribose 1-diphosphate is bound by residues Arg78, Arg103, and 130-138 (DPMLATANS). Residues Ile193 and 198–200 (GDA) contribute to the uracil site. Asp199 is a 5-phospho-alpha-D-ribose 1-diphosphate binding site.

It belongs to the UPRTase family. It depends on Mg(2+) as a cofactor.

The enzyme catalyses UMP + diphosphate = 5-phospho-alpha-D-ribose 1-diphosphate + uracil. Its pathway is pyrimidine metabolism; UMP biosynthesis via salvage pathway; UMP from uracil: step 1/1. With respect to regulation, allosterically activated by GTP. In terms of biological role, catalyzes the conversion of uracil and 5-phospho-alpha-D-ribose 1-diphosphate (PRPP) to UMP and diphosphate. The protein is Uracil phosphoribosyltransferase of Brucella abortus biovar 1 (strain 9-941).